The sequence spans 190 residues: Elongation factor P (190 aa).

This sequence belongs to the elongation factor P family.

The protein resides in the cytoplasm. It participates in protein biosynthesis; polypeptide chain elongation. Functionally, involved in peptide bond synthesis. Stimulates efficient translation and peptide-bond synthesis on native or reconstituted 70S ribosomes in vitro. Probably functions indirectly by altering the affinity of the ribosome for aminoacyl-tRNA, thus increasing their reactivity as acceptors for peptidyl transferase. The polypeptide is Elongation factor P (Persephonella marina (strain DSM 14350 / EX-H1)).